A 512-amino-acid polypeptide reads, in one-letter code: Kelch repeat protein C2 (512 aa).

Positions 2-67 (ESVIFSINGE…MRWKKINITV (66 aa)) constitute a BTB domain. The region spanning 102-176 (CIRMFNFSKR…LLKWIHKNPN (75 aa)) is the BACK domain. Kelch repeat units follow at residues 216 to 261 (IKHN…LYNC), 262 to 307 (LYII…VNDG), 309 to 354 (LYVI…FVND), 356 to 403 (IYVM…EYDG), 405 to 449 (IYAI…SCGD), and 452 to 498 (LIIA…THKS).

The protein belongs to the poxviruses Kelch family.

This chain is Kelch repeat protein C2, found in Camelus.